A 968-amino-acid polypeptide reads, in one-letter code: RNA polymerase-associated protein RapA (968 aa).

The Helicase ATP-binding domain maps to 164-334 (DVGRRHAPRV…FARLRLLDPN (171 aa)). 177–184 (DEVGLGKT) provides a ligand contact to ATP. The short motif at 280–283 (DEAH) is the DEAH box element. The 196-residue stretch at 490–685 (RVEWLMGYLT…ALKAQLEQGR (196 aa)) folds into the Helicase C-terminal domain.

This sequence belongs to the SNF2/RAD54 helicase family. RapA subfamily. In terms of assembly, interacts with the RNAP. Has a higher affinity for the core RNAP than for the holoenzyme. Its ATPase activity is stimulated by binding to RNAP.

In terms of biological role, transcription regulator that activates transcription by stimulating RNA polymerase (RNAP) recycling in case of stress conditions such as supercoiled DNA or high salt concentrations. Probably acts by releasing the RNAP, when it is trapped or immobilized on tightly supercoiled DNA. Does not activate transcription on linear DNA. Probably not involved in DNA repair. The protein is RNA polymerase-associated protein RapA of Salmonella newport (strain SL254).